Reading from the N-terminus, the 146-residue chain is Hemoglobin subunit beta (146 aa).

Val1 carries the post-translational modification N-acetylvaline. The 145-residue stretch at His2–His146 folds into the Globin domain. Thr12 is modified (phosphothreonine). The residue at position 44 (Ser44) is a Phosphoserine. The residue at position 59 (Lys59) is an N6-acetyllysine. His63 is a binding site for heme b. Lys82 carries the N6-acetyllysine modification. Heme b is bound at residue His92. Position 93 is an S-nitrosocysteine (Cys93). At Lys144 the chain carries N6-acetyllysine.

It belongs to the globin family. Heterotetramer of two alpha chains and two beta chains. Red blood cells.

Functionally, involved in oxygen transport from the lung to the various peripheral tissues. The polypeptide is Hemoglobin subunit beta (HBB) (Phoca vitulina (Harbor seal)).